A 674-amino-acid polypeptide reads, in one-letter code: MSDVDNWEPVSDNEDSTDSVKQLGPPFEHASNNDNAGDTEAESLQEVPLNTETNDVRKNLVVITNQSAADEHPTEIKHDQSRTSSTSSFFSGMISSFKSNVPSPVSRSTTPTSPVSQPSIISHRREPSMGSKRRSSRRISNATIAEIGSPLQQVEKPDEVKTRLTPSQMKEDNYDHRRFVEERYMDTPYHYASEQRNKDFHETFKSVPKDDRLLDDFNCGLNRELLYQGKLYITETHLCFNSNVLGWIAKVLIAFEDVTFMEKTSAAGLFPSAISIETKMGKTLFNGFISRDAAFGLMKEVWSRTLLQKDMASENINTKAEKSGNGKEIDDAINSIDEENNDKDANDNDTNENDDENISTNETTPNSTSSSPDKEKEKAYKLRADSSYQYDGPIYHHSTSFPAEPMANNEFVLKELPFDCAPGILFEIMFNSEQNEFLLDFLRGQEGSQITTIPNFTSIDGSSMTLKREYSYEKALHFPAGPKSTTCYVAEVIKRKDPDTYYEVISSIRTPNVPSGGSFSTKTRYLIRWNDEITCLLRVSFWVEWTGSSWIKGMVENGCKNGQLEAAQLMERILSKFIKNNVEECQITISKEEEEQDDKEVKNKLKEVDLEQPREAVVTAPAIAEQQGLKVTMETWLFLYLIVVVLLLFNLFYIRSIAVSLHQLVKLQLVELKL.

Disordered stretches follow at residues 1-52 and 65-151; these read MSDV…LNTE and NQSA…GSPL. The Cytoplasmic portion of the chain corresponds to 1–633; it reads MSDVDNWEPV…AEQQGLKVTM (633 aa). A compositionally biased stretch (basic and acidic residues) spans 69-81; that stretch reads ADEHPTEIKHDQS. The span at 82 to 119 shows a compositional bias: low complexity; the sequence is RTSSTSSFFSGMISSFKSNVPSPVSRSTTPTSPVSQPS. Thr-110 is subject to Phosphothreonine. Phosphoserine is present on residues Ser-113 and Ser-140. The residue at position 143 (Thr-143) is a Phosphothreonine. Ser-149 bears the Phosphoserine mark. The GRAM domain occupies 198–264; that stretch reads KDFHETFKSV…FEDVTFMEKT (67 aa). The span at 336–357 shows a compositional bias: acidic residues; that stretch reads IDEENNDKDANDNDTNENDDEN. The interval 336–380 is disordered; that stretch reads IDEENNDKDANDNDTNENDDENISTNETTPNSTSSSPDKEKEKAY. Residues 358–371 are compositionally biased toward low complexity; the sequence is ISTNETTPNSTSSS. Residues 409-582 form the VASt domain; it reads NEFVLKELPF…ILSKFIKNNV (174 aa). The chain crosses the membrane as a helical span at residues 634–654; that stretch reads ETWLFLYLIVVVLLLFNLFYI. Topologically, residues 655–674 are lumenal; it reads RSIAVSLHQLVKLQLVELKL.

It belongs to the YSP2 family.

The protein resides in the endoplasmic reticulum membrane. Its function is as follows. May be involved in sterol transfer between intracellular membranes. The polypeptide is Membrane-anchored lipid-binding protein LAM5 (Saccharomyces cerevisiae (strain ATCC 204508 / S288c) (Baker's yeast)).